We begin with the raw amino-acid sequence, 469 residues long: Arginine biosynthesis bifunctional protein ArgJ, mitochondrial (469 aa).

Residues Thr199, Lys228, Thr239, Glu325, Asn464, and Thr469 each contribute to the substrate site. Thr239 (nucleophile) is an active-site residue.

This sequence belongs to the ArgJ family. As to quaternary structure, heterodimer of an alpha and a beta chain. Post-translationally, the alpha and beta chains are autoproteolytically processed from a single precursor protein within the mitochondrion.

The protein localises to the mitochondrion matrix. The catalysed reaction is N(2)-acetyl-L-ornithine + L-glutamate = N-acetyl-L-glutamate + L-ornithine. It catalyses the reaction L-glutamate + acetyl-CoA = N-acetyl-L-glutamate + CoA + H(+). Its pathway is amino-acid biosynthesis; L-arginine biosynthesis; L-ornithine and N-acetyl-L-glutamate from L-glutamate and N(2)-acetyl-L-ornithine (cyclic): step 1/1. It functions in the pathway amino-acid biosynthesis; L-arginine biosynthesis; N(2)-acetyl-L-ornithine from L-glutamate: step 1/4. Its function is as follows. Catalyzes two activities which are involved in the cyclic version of arginine biosynthesis: the synthesis of acetylglutamate from glutamate and acetyl-CoA, and of ornithine by transacetylation between acetylornithine and glutamate. The chain is Arginine biosynthesis bifunctional protein ArgJ, mitochondrial from Sordaria macrospora (strain ATCC MYA-333 / DSM 997 / K(L3346) / K-hell).